The sequence spans 97 residues: MNIRPLHDRVIIKRQESESKSAGGIVLTGSAAGKSTRGTVLAVGNGRILDNGSVKSLDVKVGDVVIFNEGYGAKTEKMDHEEVLILTESDILAIVEE.

It belongs to the GroES chaperonin family. Heptamer of 7 subunits arranged in a ring. Interacts with the chaperonin GroEL.

Its subcellular location is the cytoplasm. Its function is as follows. Together with the chaperonin GroEL, plays an essential role in assisting protein folding. The GroEL-GroES system forms a nano-cage that allows encapsulation of the non-native substrate proteins and provides a physical environment optimized to promote and accelerate protein folding. GroES binds to the apical surface of the GroEL ring, thereby capping the opening of the GroEL channel. The protein is Co-chaperonin GroES of Buchnera aphidicola subsp. Tetraneura caerulescens.